The primary structure comprises 226 residues: MVKKTLGRRKVEIVKMTKESNLQVTFSKRKAGLFKKASEFCTLCDAKIAMIVFSPAGKVFSFGHPNVDVLLDHFRGCVVGHNNTNLDESYTKLHVQMLNKSYTEVKAEVEKEQKNKQSRAQNERENENAEEWWSKSPLELNLSQSTCMIRVLKDLKKIVDEKAIQLIHQTNPNFYVGSSSNAAAPATVSGGNISTNQGFFDQNGMTTNPTQTLLFGFDIMNRTPGV.

The MADS-box domain maps to 6–66 (LGRRKVEIVK…GKVFSFGHPN (61 aa)). The stretch at 95-132 (VQMLNKSYTEVKAEVEKEQKNKQSRAQNERENENAEEW) forms a coiled coil. Basic and acidic residues predominate over residues 108–127 (EVEKEQKNKQSRAQNERENE). The interval 108–131 (EVEKEQKNKQSRAQNERENENAEE) is disordered.

It localises to the nucleus. Its function is as follows. Probable transcription factor that controls female gametophyte (megagametogenesis) development and chloroplast biogenesis during embryo development. This Arabidopsis thaliana (Mouse-ear cress) protein is Agamous-like MADS-box protein AGL23.